Reading from the N-terminus, the 252-residue chain is Imidazole glycerol phosphate synthase subunit HisF (252 aa).

Active-site residues include D11 and D130.

The protein belongs to the HisA/HisF family. As to quaternary structure, heterodimer of HisH and HisF.

Its subcellular location is the cytoplasm. The enzyme catalyses 5-[(5-phospho-1-deoxy-D-ribulos-1-ylimino)methylamino]-1-(5-phospho-beta-D-ribosyl)imidazole-4-carboxamide + L-glutamine = D-erythro-1-(imidazol-4-yl)glycerol 3-phosphate + 5-amino-1-(5-phospho-beta-D-ribosyl)imidazole-4-carboxamide + L-glutamate + H(+). It participates in amino-acid biosynthesis; L-histidine biosynthesis; L-histidine from 5-phospho-alpha-D-ribose 1-diphosphate: step 5/9. In terms of biological role, IGPS catalyzes the conversion of PRFAR and glutamine to IGP, AICAR and glutamate. The HisF subunit catalyzes the cyclization activity that produces IGP and AICAR from PRFAR using the ammonia provided by the HisH subunit. The protein is Imidazole glycerol phosphate synthase subunit HisF of Thermococcus onnurineus (strain NA1).